A 374-amino-acid chain; its full sequence is MCHFNELSIEIESKNLRSAKKIFHCPYEECGKKYSRPSLLEQHLRTHSNERPFVCDYTGCSKAFYRKSHLKIHKRCHTNVKPFSCHYDGCDAQFYTQQHLERHIEVHRKPKPYACTWEGCDECFSKHQQLRSHISACHTHLLPYPCTYQDCELRFATKQKLQNHVNRAHEKIISYSCPHESCVGHEGFEKWSQLQNHIREAHVPSCSICGRQFKTAAHLRHHVVLHQTTLEERKTYHCPMEGCKKSFTRSSALKKHISVIHEGNMAFHCDSCGTKFGYKHMLQRHLERGTCKKAHKPYINECGIKHDGIEGVAIHDQKEKELSSNLVSDVAKKIINEVTGHGYKEAREYSCSFPECNYRFKRLYDMHRHLNSHH.

7 C2H2-type zinc fingers span residues Phe-23–His-47, Phe-53–His-77, Phe-83–His-107, Tyr-113–His-138, Tyr-144–His-169, Pro-204–His-226, and Tyr-236–His-261. The C2H2-type 8; atypical zinc finger occupies Phe-267–Cys-291. The segment at Tyr-349 to His-374 adopts a C2H2-type 9 zinc-finger fold.

Its subcellular location is the nucleus. Its function is as follows. Is required for correct transcription of 5S RNA genes by RNA polymerase III. Also binds the transcribed 5S RNA's. Initiates transcription of the 5S ribosomal RNA gene. This is Transcription factor IIIA (sfc2) from Schizosaccharomyces pombe (strain 972 / ATCC 24843) (Fission yeast).